Consider the following 787-residue polypeptide: Phenylalanine--tRNA ligase beta subunit (787 aa).

The tRNA-binding domain occupies 39–149 (APAFAGVVIA…EDAPVGTNIR (111 aa)). In terms of domain architecture, B5 spans 400 to 475 (PEVKQVGLRL…RVYGYENIPD (76 aa)). Residues Asp453, Asp459, Glu462, and Glu463 each contribute to the Mg(2+) site. One can recognise an FDX-ACB domain in the interval 694-786 (SKFQPVRRDL…AATAAGARLR (93 aa)).

It belongs to the phenylalanyl-tRNA synthetase beta subunit family. Type 1 subfamily. In terms of assembly, tetramer of two alpha and two beta subunits. Mg(2+) serves as cofactor.

It is found in the cytoplasm. The catalysed reaction is tRNA(Phe) + L-phenylalanine + ATP = L-phenylalanyl-tRNA(Phe) + AMP + diphosphate + H(+). The protein is Phenylalanine--tRNA ligase beta subunit (pheT) of Neisseria meningitidis serogroup A / serotype 4A (strain DSM 15465 / Z2491).